We begin with the raw amino-acid sequence, 205 residues long: High frequency lysogenization protein HflD homolog (205 aa).

This sequence belongs to the HflD family.

The protein resides in the cytoplasm. The protein localises to the cell inner membrane. This Shewanella oneidensis (strain ATCC 700550 / JCM 31522 / CIP 106686 / LMG 19005 / NCIMB 14063 / MR-1) protein is High frequency lysogenization protein HflD homolog.